The following is a 129-amino-acid chain: Small ribosomal subunit protein uS11 (129 aa).

The protein belongs to the universal ribosomal protein uS11 family. As to quaternary structure, part of the 30S ribosomal subunit. Interacts with proteins S7 and S18. Binds to IF-3.

Its function is as follows. Located on the platform of the 30S subunit, it bridges several disparate RNA helices of the 16S rRNA. Forms part of the Shine-Dalgarno cleft in the 70S ribosome. The chain is Small ribosomal subunit protein uS11 from Aliivibrio fischeri (strain ATCC 700601 / ES114) (Vibrio fischeri).